Reading from the N-terminus, the 84-residue chain is MNIFDFFRDRKKGSTASVAKERLQIIVAHERGQRSTPDYLPALQKELVEVIRKYVNIESDQVQVALESQGSCSILELNITLPDR.

The protein belongs to the MinE family.

Prevents the cell division inhibition by proteins MinC and MinD at internal division sites while permitting inhibition at polar sites. This ensures cell division at the proper site by restricting the formation of a division septum at the midpoint of the long axis of the cell. The chain is Cell division topological specificity factor from Pseudomonas syringae pv. syringae (strain B728a).